Reading from the N-terminus, the 364-residue chain is Heme A synthase (364 aa).

Helical transmembrane passes span 25–45 (ALRL…LVGG), 111–131 (FLAR…WATG), 139–159 (WPLV…WWMV), 174–194 (LATH…VMRG), 212–232 (AIAL…VAGL), 270–290 (VQFV…YHMV), 305–325 (SVVL…ALLL), and 327–347 (VPLD…GFTV). His274 provides a ligand contact to heme. Position 335 (His335) interacts with heme.

This sequence belongs to the COX15/CtaA family. Type 2 subfamily. As to quaternary structure, interacts with CtaB. It depends on heme b as a cofactor.

It localises to the cell membrane. The enzyme catalyses Fe(II)-heme o + 2 A + H2O = Fe(II)-heme a + 2 AH2. It participates in porphyrin-containing compound metabolism; heme A biosynthesis; heme A from heme O: step 1/1. Catalyzes the conversion of heme O to heme A by two successive hydroxylations of the methyl group at C8. The first hydroxylation forms heme I, the second hydroxylation results in an unstable dihydroxymethyl group, which spontaneously dehydrates, resulting in the formyl group of heme A. This Allorhizobium ampelinum (strain ATCC BAA-846 / DSM 112012 / S4) (Agrobacterium vitis (strain S4)) protein is Heme A synthase.